Reading from the N-terminus, the 304-residue chain is Non-specific ribonucleoside hydrolase RihC (304 aa).

His-233 is an active-site residue.

This sequence belongs to the IUNH family. RihC subfamily.

Its function is as follows. Hydrolyzes both purine and pyrimidine ribonucleosides with a broad-substrate specificity. The polypeptide is Non-specific ribonucleoside hydrolase RihC (Shigella dysenteriae serotype 1 (strain Sd197)).